The following is a 1009-amino-acid chain: Epididymis-specific alpha-mannosidase (1009 aa).

An N-terminal signal peptide occupies residues Met1–Ser23. Zn(2+)-binding residues include His36, Asp38, and Asp151. The Nucleophile role is filled by Asp151. Residues Asn226, Asn249, Asn294, and Asn336 are each glycosylated (N-linked (GlcNAc...) asparagine). A Zn(2+)-binding site is contributed by His420. 8 N-linked (GlcNAc...) asparagine glycosylation sites follow: Asn516, Asn608, Asn670, Asn675, Asn748, Asn808, Asn812, and Asn890. A disordered region spans residues Gly972 to Ile991.

The protein belongs to the glycosyl hydrolase 38 family. Zn(2+) serves as cofactor.

It localises to the secreted. It carries out the reaction Hydrolysis of terminal, non-reducing alpha-D-mannose residues in alpha-D-mannosides.. The protein is Epididymis-specific alpha-mannosidase (MAN2B2) of Homo sapiens (Human).